The sequence spans 524 residues: uncharacterized protein (524 aa).

Positions Met1–Gly21 are cleaved as a signal peptide. A lipid anchor (N-palmitoyl cysteine) is attached at Cys22. A lipid anchor (S-diacylglycerol cysteine) is attached at Cys22.

The protein belongs to the MG067/MG068/MG395 family.

It localises to the cell membrane. This is an uncharacterized protein from Mycoplasma pneumoniae (strain ATCC 29342 / M129 / Subtype 1) (Mycoplasmoides pneumoniae).